The chain runs to 620 residues: Probable translation initiation factor IF-2 (620 aa).

Positions 1-10 are enriched in acidic residues; the sequence is MSDTDADADT. The disordered stretch occupies residues 1-29; sequence MSDTDADADTDAVSTTETSMNADANANAD. Positions 11 to 29 are enriched in low complexity; that stretch reads DAVSTTETSMNADANANAD. The 216-residue stretch at 33–248 folds into the tr-type G domain; the sequence is LRTPIVAVLG…VLMGLSQRYM (216 aa). The tract at residues 42–49 is G1; it reads GHVDHGKT. GTP is bound at residue 42 to 49; that stretch reads GHVDHGKT. Residues 67 to 71 form a G2 region; that stretch reads AITQH. The G3 stretch occupies residues 104 to 107; it reads DTPG. Residues 104-108 and 158-161 each bind GTP; these read DTPGH and NKVD. A G4 region spans residues 158-161; the sequence is NKVD. Positions 162–183 are enriched in polar residues; that stretch reads TTPGWTPTDGSPIQPTYESQPS. Residues 162-185 form a disordered region; it reads TTPGWTPTDGSPIQPTYESQPSAA. The tract at residues 226 to 228 is G5; sequence SAI.

Belongs to the TRAFAC class translation factor GTPase superfamily. Classic translation factor GTPase family. IF-2 subfamily.

Its function is as follows. Function in general translation initiation by promoting the binding of the formylmethionine-tRNA to ribosomes. Seems to function along with eIF-2. This is Probable translation initiation factor IF-2 from Haloquadratum walsbyi (strain DSM 16790 / HBSQ001).